Consider the following 130-residue polypeptide: Abscisic acid and environmental stress-inducible protein TAS14 (130 aa).

The interval 1–130 (MAQYGNQDQM…KIKDKIPGMH (130 aa)) is disordered. The segment covering 27–58 (QGTGTGGMMGGTGTGGMMGGTGGEYGTQGMGT) has biased composition (gly residues). Composition is skewed to basic and acidic residues over residues 61 to 73 (HHHE…RRSD) and 92 to 130 (KEKI…PGMH).

Belongs to the plant dehydrin family.

The sequence is that of Abscisic acid and environmental stress-inducible protein TAS14 (TAS14) from Solanum lycopersicum (Tomato).